Consider the following 253-residue polypeptide: Phosphate import ATP-binding protein PstB (253 aa).

Residues 7–248 (IDARDVNFWY…PEKEATQNYI (242 aa)) form the ABC transporter domain. ATP is bound at residue 39 to 46 (GPSGCGKS).

This sequence belongs to the ABC transporter superfamily. Phosphate importer (TC 3.A.1.7) family. In terms of assembly, the complex is composed of two ATP-binding proteins (PstB), two transmembrane proteins (PstC and PstA) and a solute-binding protein (PstS).

It localises to the cell inner membrane. It catalyses the reaction phosphate(out) + ATP + H2O = ADP + 2 phosphate(in) + H(+). Part of the ABC transporter complex PstSACB involved in phosphate import. Responsible for energy coupling to the transport system. The chain is Phosphate import ATP-binding protein PstB from Bacteroides fragilis (strain ATCC 25285 / DSM 2151 / CCUG 4856 / JCM 11019 / LMG 10263 / NCTC 9343 / Onslow / VPI 2553 / EN-2).